The sequence spans 132 residues: Protein MrkF (132 aa).

It localises to the fimbrium. Functionally, appears to affect the stability of the intact fimbriae on the cell surface. The chain is Protein MrkF (mrkF) from Klebsiella pneumoniae.